A 215-amino-acid chain; its full sequence is Ribonuclease T (215 aa).

Positions 21 to 195 (VVIDVETAGF…YDSKKTAELF (175 aa)) constitute an Exonuclease domain. Mg(2+) contacts are provided by D24, E26, H182, and D187. The active-site Proton donor/acceptor is H182.

It belongs to the RNase T family. In terms of assembly, homodimer. Mg(2+) serves as cofactor.

Its function is as follows. Trims short 3' overhangs of a variety of RNA species, leaving a one or two nucleotide 3' overhang. Responsible for the end-turnover of tRNA: specifically removes the terminal AMP residue from uncharged tRNA (tRNA-C-C-A). Also appears to be involved in tRNA biosynthesis. The polypeptide is Ribonuclease T (Wigglesworthia glossinidia brevipalpis).